Consider the following 205-residue polypeptide: Peroxynitrite isomerase (205 aa).

The segment at 1–23 (MTEPDPAAAEQRPSVGRNLPTFQ) is disordered. The short motif at 52-58 (GVWRGEG) is the GXWXGXG element. Positions 63, 168, and 195 each coordinate heme b.

It belongs to the nitrobindin family. In terms of assembly, homodimer. The cofactor is heme b.

It carries out the reaction peroxynitrite = nitrate. The protein operates within nitrogen metabolism. Functionally, heme-binding protein able to scavenge peroxynitrite and to protect free L-tyrosine against peroxynitrite-mediated nitration, by acting as a peroxynitrite isomerase that converts peroxynitrite to nitrate. Therefore, this protein likely plays a role in peroxynitrite sensing and in the detoxification of reactive nitrogen and oxygen species (RNS and ROS, respectively). Is able to bind nitric oxide (NO) in vitro, but may act as a sensor of peroxynitrite levels in vivo. In Mycobacteroides abscessus (strain ATCC 19977 / DSM 44196 / CCUG 20993 / CIP 104536 / JCM 13569 / NCTC 13031 / TMC 1543 / L948) (Mycobacterium abscessus), this protein is Peroxynitrite isomerase.